Reading from the N-terminus, the 249-residue chain is Coproheme decarboxylase (249 aa).

Fe-coproporphyrin III-binding positions include R131, 145-149, H172, and Q185; that span reads YPMDK. The active site involves Y145.

This sequence belongs to the ChdC family. Type 1 subfamily. Fe-coproporphyrin III serves as cofactor.

It carries out the reaction Fe-coproporphyrin III + 2 H2O2 + 2 H(+) = heme b + 2 CO2 + 4 H2O. It catalyses the reaction Fe-coproporphyrin III + H2O2 + H(+) = harderoheme III + CO2 + 2 H2O. The catalysed reaction is harderoheme III + H2O2 + H(+) = heme b + CO2 + 2 H2O. It participates in porphyrin-containing compound metabolism; protoheme biosynthesis. Functionally, involved in coproporphyrin-dependent heme b biosynthesis. Catalyzes the decarboxylation of Fe-coproporphyrin III (coproheme) to heme b (protoheme IX), the last step of the pathway. The reaction occurs in a stepwise manner with a three-propionate intermediate. In Staphylococcus saprophyticus subsp. saprophyticus (strain ATCC 15305 / DSM 20229 / NCIMB 8711 / NCTC 7292 / S-41), this protein is Coproheme decarboxylase.